The chain runs to 255 residues: Aquaporin TIP4-1 (255 aa).

Helical transmembrane passes span 25 to 45 (AVLAELVLTFLFVFTGVSAAM) and 61 to 81 (TLAAVAIAHALAAGVLVTAGF). Residues 89–91 (NPA) carry the NPA 1 motif. Transmembrane regions (helical) follow at residues 108 to 128 (VLYVAAQLLASSAACVLLRFL), 148 to 168 (GLVMEVILTFSLLFVTYAMIL), and 176 to 196 (AIGPLLTGLIVGANSLAGGNF). The NPA 2 signature appears at 202–204 (NPA). A helical transmembrane segment spans residues 223 to 243 (WIGPLLGGPLAGFVYESLFLV).

Belongs to the MIP/aquaporin (TC 1.A.8) family. TIP (TC 1.A.8.10) subfamily.

The protein resides in the vacuole membrane. Functionally, aquaporins facilitate the transport of water and small neutral solutes across cell membranes. The polypeptide is Aquaporin TIP4-1 (TIP4-1) (Zea mays (Maize)).